The following is a 748-amino-acid chain: Transducin-like enhancer protein 4 (748 aa).

Disordered stretches follow at residues 1–20 (MIRDLSKMYRRRAHPAPHQP) and 157–332 (LPIK…DPLA). The interval 1–112 (MIRDLSKMYR…SQEQQQLQAQ (112 aa)) is q domain. The interval 113 to 179 (HLLTWTWSAC…HQRDRDSIKS (67 aa)) is GP domain. The segment covering 158 to 177 (PIKDEKKHHDNDHQRDRDSI) has biased composition (basic and acidic residues). Low complexity predominate over residues 178-189 (KSSSVSPSASFR). Residues 180 to 249 (SSVSPSASFR…SPRGSPAHSP (70 aa)) form a ccN domain region. Ser183, Ser187, Ser191, and Ser197 each carry phosphoserine. Residues 190–227 (GSEKHRNSTDYSSESKKQKTEEKEIAARYDSDGEKSDD) show a composition bias toward basic and acidic residues. Lys212 carries the post-translational modification N6-acetyllysine. Ser220 is modified (phosphoserine). At Ser225 the chain carries Phosphoserine; by CK2. Position 240 is a phosphoserine; by CDK1 (Ser240). 2 positions are modified to phosphoserine: Ser244 and Ser248. Over residues 248–264 (SPRENGLDKTRLLKKDA) the composition is skewed to basic and acidic residues. Residues 250-427 (RENGLDKTRL…PGGKPAYSFH (178 aa)) form an SP domain region. N6-acetyllysine is present on Lys256. A compositionally biased stretch (low complexity) spans 265–280 (PISPASVASSSSTPSS). A Phosphoserine modification is found at Ser267. Residues 292–303 (TTPVSKSNTPTP) show a composition bias toward polar residues. Thr293 is subject to Phosphothreonine. Phosphoserine is present on residues Ser296 and Ser298. Phosphothreonine is present on residues Thr300, Thr302, Thr309, and Thr315. Phosphoserine is present on Ser394. WD repeat units follow at residues 460–498 (NHGEVVCAVTISNPTRHVYTGGKGCVKVWDITDPGNKSP), 506–545 (NRDNYIRSCRLLPDGRTLIVGGEASTLSIWDLAAPTPRIK), 550–589 (SSAPACYALAISPDSKVCFSCCSDGNIAVWDLHNQTLVRQ), 592–631 (GHTDGASCIDISNDGTKLWTGGLDNTVRSWDLREGRQLQQ), 633–672 (DFTSQIFSLGYCPTGEWLAVGMENSNVEVLHVTKPDKYQL), 674–713 (LHESCVLSLKFAHCGKWFVRPGKDNLLNAWRTPYGASIFQ), and 715–748 (KESSSVLSCDISADDKYIVTGSGDKKATVYEVIY).

The protein belongs to the WD repeat Groucho/TLE family. As to quaternary structure, homooligomer and heterooligomer with other family members. Binds PAX5, LEF1, TCF7, TCF7L1 and TCF7L2. Interacts with ZNF703; TLE4 may mediate ZNF703 transcriptional repression. Interacts with SIX3 and SIX6. Interacts with PAX2. Post-translationally, phosphorylated. PAX5 binding increases phosphorylation. Ubiquitinated by XIAP/BIRC4.

The protein resides in the nucleus. Functionally, transcriptional corepressor that binds to a number of transcription factors. Inhibits the transcriptional activation mediated by PAX5, and by CTNNB1 and TCF family members in Wnt signaling. The effects of full-length TLE family members may be modulated by association with dominant-negative AES. Essential for the transcriptional repressor activity of SIX3 during retina and lens development and for SIX3 transcriptional auto-repression. Involved in transcriptional repression of GNRHR and enhances MSX1-mediated transcriptional repression of CGA/alpha-GSU. This chain is Transducin-like enhancer protein 4 (Tle4), found in Rattus norvegicus (Rat).